A 61-amino-acid chain; its full sequence is Small ribosomal subunit protein uS14 (61 aa).

Zn(2+) is bound by residues C24, C27, C40, and C43.

This sequence belongs to the universal ribosomal protein uS14 family. Zinc-binding uS14 subfamily. Part of the 30S ribosomal subunit. Contacts proteins S3 and S10. The cofactor is Zn(2+).

Functionally, binds 16S rRNA, required for the assembly of 30S particles and may also be responsible for determining the conformation of the 16S rRNA at the A site. In Kosmotoga olearia (strain ATCC BAA-1733 / DSM 21960 / TBF 19.5.1), this protein is Small ribosomal subunit protein uS14.